A 684-amino-acid chain; its full sequence is Phenoloxidase 2 (684 aa).

The propeptide at 1 to 51 (MSNTAVLNDLVALYDRPTEPMFRVKAKKSFKVPKEYVTDRFKNVAVEISNR) is removed by PPAF1. N-linked (GlcNAc...) asparagine glycosylation is found at N81 and N91. Residues H209, H213, and H238 each coordinate Cu cation. The N-linked (GlcNAc...) asparagine glycan is linked to N330. E350 (proton acceptor) is an active-site residue. H365, H369, and H405 together coordinate Cu cation. N416, N487, N491, and N546 each carry an N-linked (GlcNAc...) asparagine glycan. 2 disulfides stabilise this stretch: C581-C623 and C583-C630.

It belongs to the tyrosinase family. Dimer. Might form a homodimer or a heterodimer with PPO1. Might interact with PPAF2 (via CLIP domain); the interaction might be required for PPO2 activity. Cu(2+) serves as cofactor. Precursor cleaved by PPAF1. In terms of tissue distribution, hemocytes.

It localises to the secreted. Its function is as follows. This is a copper-containing oxidase that functions in the formation of pigments such as melanins and other polyphenolic compounds. Catalyzes the oxidation of o-diphenols (N-acetyldopamine, 4-methylcatechol and dopamine). Cannot oxidize monophenols and p-phenols (L-tyrosine, tyramine, gentisic acid and hydroquinone). Binds to the surface of hemocytes and is involved in hemocyte melanization. Activation of the enzyme in response to bacterial lipopolysaccharides (LPS) suggests it may play a role in innate immunity. The sequence is that of Phenoloxidase 2 from Holotrichia diomphalia (Korean black chafer).